A 228-amino-acid polypeptide reads, in one-letter code: Peptide deformylase (228 aa).

2 disordered regions span residues 1 to 28 and 116 to 138; these read MSQD…EGAV and GVPK…EPDR. Polar residues-rich tracts occupy residues 8-18 and 123-133; these read TGCNTHSNTHS and NKQQANNSTSC. Fe cation contacts are provided by Cys-141 and His-183. The active site involves Glu-184. His-187 serves as a coordination point for Fe cation.

It belongs to the polypeptide deformylase family. Fe(2+) serves as cofactor.

It carries out the reaction N-terminal N-formyl-L-methionyl-[peptide] + H2O = N-terminal L-methionyl-[peptide] + formate. Functionally, removes the formyl group from the N-terminal Met of newly synthesized proteins. Requires at least a dipeptide for an efficient rate of reaction. N-terminal L-methionine is a prerequisite for activity but the enzyme has broad specificity at other positions. This chain is Peptide deformylase, found in Tropheryma whipplei (strain Twist) (Whipple's bacillus).